The following is a 486-amino-acid chain: Ribosomal RNA small subunit methyltransferase F (486 aa).

Residues 124–130, Glu148, Asp175, and Asp193 each bind S-adenosyl-L-methionine; that span reads ASAPGSK. The active-site Nucleophile is Cys246.

This sequence belongs to the class I-like SAM-binding methyltransferase superfamily. RsmB/NOP family.

Its subcellular location is the cytoplasm. It carries out the reaction cytidine(1407) in 16S rRNA + S-adenosyl-L-methionine = 5-methylcytidine(1407) in 16S rRNA + S-adenosyl-L-homocysteine + H(+). Specifically methylates the cytosine at position 1407 (m5C1407) of 16S rRNA. This is Ribosomal RNA small subunit methyltransferase F from Shewanella putrefaciens (strain CN-32 / ATCC BAA-453).